We begin with the raw amino-acid sequence, 351 residues long: Epoxyqueuosine reductase (351 aa).

Catalysis depends on aspartate 131, which acts as the Proton donor. The 4Fe-4S ferredoxin-type domain occupies 177–205; that stretch reads EDQPVDYGCGSCTRCVDFCPTKALLGDGR. Residues cysteine 185, cysteine 188, cysteine 191, cysteine 195, cysteine 211, cysteine 237, cysteine 240, and cysteine 244 each contribute to the [4Fe-4S] cluster site.

The protein belongs to the QueG family. In terms of assembly, monomer. It depends on cob(II)alamin as a cofactor. Requires [4Fe-4S] cluster as cofactor.

It is found in the cytoplasm. It carries out the reaction epoxyqueuosine(34) in tRNA + AH2 = queuosine(34) in tRNA + A + H2O. It participates in tRNA modification; tRNA-queuosine biosynthesis. Catalyzes the conversion of epoxyqueuosine (oQ) to queuosine (Q), which is a hypermodified base found in the wobble positions of tRNA(Asp), tRNA(Asn), tRNA(His) and tRNA(Tyr). This is Epoxyqueuosine reductase from Lactococcus garvieae (strain Lg2) (Enterococcus seriolicida).